A 131-amino-acid chain; its full sequence is Anaerobic and virulence modulator AnvM (131 aa).

Plays an essential role by modulating the expression of hundreds of genes including quorum sensing system genes and oxidative stress resistance genes under both aerobic and anaerobic conditions. The chain is Anaerobic and virulence modulator AnvM from Pseudomonas aeruginosa (strain ATCC 15692 / DSM 22644 / CIP 104116 / JCM 14847 / LMG 12228 / 1C / PRS 101 / PAO1).